Reading from the N-terminus, the 255-residue chain is ETS-related transcription factor Elf-5 (255 aa).

Residues 33–119 (YPAFEHQTAC…FILQSIRSQG (87 aa)) enclose the PNT domain. Residues 163-244 (SHLWEFVRDL…VDRRLVYKFG (82 aa)) constitute a DNA-binding region (ETS).

Belongs to the ETS family.

It is found in the nucleus. Functionally, transcriptionally activator that may play a role in regulating the later stages of keratinocytes terminal differentiation. Binds to DNA sequences containing the consensus nucleotide core sequence GGA[AT]. The chain is ETS-related transcription factor Elf-5 (ELF5) from Bos taurus (Bovine).